The sequence spans 261 residues: UPF0246 protein AZOSEA34360 (261 aa).

This sequence belongs to the UPF0246 family.

In Aromatoleum aromaticum (strain DSM 19018 / LMG 30748 / EbN1) (Azoarcus sp. (strain EbN1)), this protein is UPF0246 protein AZOSEA34360.